The primary structure comprises 417 residues: Type II methyltransferase M.Eco47II (417 aa).

The SAM-dependent MTase C5-type domain occupies 81–414 (YTVLELFAGA…KSVVHLLDKI (334 aa)). The active site involves C153.

This sequence belongs to the class I-like SAM-binding methyltransferase superfamily. C5-methyltransferase family.

The catalysed reaction is a 2'-deoxycytidine in DNA + S-adenosyl-L-methionine = a 5-methyl-2'-deoxycytidine in DNA + S-adenosyl-L-homocysteine + H(+). Functionally, a methylase that recognizes the double-stranded sequence 5'-GGNCC-3', methylates C-? on both strands, and protects the DNA from cleavage by both the Eco47I and Eco47II endonucleases. The sequence is that of Type II methyltransferase M.Eco47II from Escherichia coli.